Here is a 116-residue protein sequence, read N- to C-terminus: Large ribosomal subunit protein bL19 (116 aa).

Belongs to the bacterial ribosomal protein bL19 family.

In terms of biological role, this protein is located at the 30S-50S ribosomal subunit interface and may play a role in the structure and function of the aminoacyl-tRNA binding site. This is Large ribosomal subunit protein bL19 from Staphylococcus epidermidis (strain ATCC 35984 / DSM 28319 / BCRC 17069 / CCUG 31568 / BM 3577 / RP62A).